Consider the following 339-residue polypeptide: Anthranilate phosphoribosyltransferase (339 aa).

Residues Gly79, 82 to 83, Ser87, 89 to 92, 107 to 115, and Ser119 contribute to the 5-phospho-alpha-D-ribose 1-diphosphate site; these read GD, NIST, and KHGNRSISS. An anthranilate-binding site is contributed by Gly79. Residue Ser91 coordinates Mg(2+). Asn110 contacts anthranilate. Position 165 (Arg165) interacts with anthranilate. Residues Asp224 and Glu225 each coordinate Mg(2+).

Belongs to the anthranilate phosphoribosyltransferase family. In terms of assembly, homodimer. Requires Mg(2+) as cofactor.

The enzyme catalyses N-(5-phospho-beta-D-ribosyl)anthranilate + diphosphate = 5-phospho-alpha-D-ribose 1-diphosphate + anthranilate. It functions in the pathway amino-acid biosynthesis; L-tryptophan biosynthesis; L-tryptophan from chorismate: step 2/5. Its function is as follows. Catalyzes the transfer of the phosphoribosyl group of 5-phosphorylribose-1-pyrophosphate (PRPP) to anthranilate to yield N-(5'-phosphoribosyl)-anthranilate (PRA). The polypeptide is Anthranilate phosphoribosyltransferase (Listeria monocytogenes serovar 1/2a (strain ATCC BAA-679 / EGD-e)).